The primary structure comprises 1019 residues: UPF0182 protein Krad_1193 (1019 aa).

The next 7 membrane-spanning stretches (helical) occupy residues 19-39 (GAAL…VVGA), 61-81 (LWLQ…AVAV), 115-135 (RLVV…VAMS), 169-189 (WLAF…IAGL), 213-233 (VHLA…YWLD), 264-284 (AILA…AVGT), and 291-311 (IGTG…PWAV). Disordered stretches follow at residues 897–934 (GNSG…ATGD) and 977–1019 (DAAS…TPTP). Low complexity predominate over residues 977 to 1005 (DAASAAEARLERSGTSGPTSSSSPSASSA). A compositionally biased stretch (pro residues) spans 1006 to 1019 (PPVPGETPAATPTP).

The protein belongs to the UPF0182 family.

It is found in the cell membrane. In Kineococcus radiotolerans (strain ATCC BAA-149 / DSM 14245 / SRS30216), this protein is UPF0182 protein Krad_1193.